The chain runs to 124 residues: UPF0344 protein OB1184 (124 aa).

A run of 4 helical transmembrane segments spans residues 3 to 23 (HMHITSWALGLILFIIALVMY), 33 to 53 (IIHMILRLMFILIIITGGILT), 62 to 82 (MPILGEALVKALAGLWLVAMM), and 104 to 124 (IALVLVIVLGFFRLPMGFLFI).

This sequence belongs to the UPF0344 family.

The protein resides in the cell membrane. In Oceanobacillus iheyensis (strain DSM 14371 / CIP 107618 / JCM 11309 / KCTC 3954 / HTE831), this protein is UPF0344 protein OB1184.